We begin with the raw amino-acid sequence, 419 residues long: MNIIDELEWRGAIYQQTDEEGLRKWVEEKQISLYCGIDPSGDSMHIGHLIPFMILRRFQNAGHRPIILVGGATGTIGDPSGKKEERKLQSMEQISKNVESLRVQLGKIFDFEGNSAASMVNNYDWTKDVSILDFLRDYGKEFNVNTMLSKDIVASRLEVGISFTEFAYQILQAMDFNHLYEFNDCRLQIGGSDQWGNITAGLDLIRKKQGENAKAFGLTIPLLTKADGTKFGKSEGGAIWLNPEKTTPYEFYQFWINTDDRDVVKYLKYFTFLTEAEIDELAKQVETEPHLRAAQKTLAAEMTKFVHSEEALEQALKISKALFSGDVKALTADEIEQGFKDVPTFVAEDTEANLVDWLVTLGIEPSKRQAREDVGNGAIYINGERQQDLEKIMDASDRIENKFTIVRRGKKKYFLVSYK.

L-tyrosine is bound at residue Tyr34. A 'HIGH' region motif is present at residues 39–48 (PSGDSMHIGH). Residues Tyr168 and Gln172 each coordinate L-tyrosine. A 'KMSKS' region motif is present at residues 230 to 234 (KFGKS). Position 233 (Lys233) interacts with ATP. One can recognise an S4 RNA-binding domain in the interval 352–418 (ANLVDWLVTL…GKKKYFLVSY (67 aa)).

Belongs to the class-I aminoacyl-tRNA synthetase family. TyrS type 1 subfamily. As to quaternary structure, homodimer.

The protein localises to the cytoplasm. The catalysed reaction is tRNA(Tyr) + L-tyrosine + ATP = L-tyrosyl-tRNA(Tyr) + AMP + diphosphate + H(+). Catalyzes the attachment of tyrosine to tRNA(Tyr) in a two-step reaction: tyrosine is first activated by ATP to form Tyr-AMP and then transferred to the acceptor end of tRNA(Tyr). The protein is Tyrosine--tRNA ligase of Listeria monocytogenes serotype 4b (strain CLIP80459).